A 246-amino-acid chain; its full sequence is Octanoyltransferase (246 aa).

In terms of domain architecture, BPL/LPL catalytic spans 54–240 (DPPPEAVWLL…CLEPNADAAI (187 aa)). Substrate-binding positions include 96-103 (RGGEVTHH), 163-165 (AIG), and 176-178 (GVA). C194 (acyl-thioester intermediate) is an active-site residue.

This sequence belongs to the LipB family.

Its subcellular location is the cytoplasm. The enzyme catalyses octanoyl-[ACP] + L-lysyl-[protein] = N(6)-octanoyl-L-lysyl-[protein] + holo-[ACP] + H(+). It functions in the pathway protein modification; protein lipoylation via endogenous pathway; protein N(6)-(lipoyl)lysine from octanoyl-[acyl-carrier-protein]: step 1/2. Its function is as follows. Catalyzes the transfer of endogenously produced octanoic acid from octanoyl-acyl-carrier-protein onto the lipoyl domains of lipoate-dependent enzymes. Lipoyl-ACP can also act as a substrate although octanoyl-ACP is likely to be the physiological substrate. This is Octanoyltransferase from Synechococcus sp. (strain WH7803).